The following is a 272-amino-acid chain: 3-methyl-2-oxobutanoate hydroxymethyltransferase (272 aa).

2 residues coordinate Mg(2+): Asp51 and Asp90. 3-methyl-2-oxobutanoate is bound by residues 51–52 (DS), Asp90, and Lys118. Glu120 is a Mg(2+) binding site. The Proton acceptor role is filled by Glu187.

This sequence belongs to the PanB family. As to quaternary structure, homodecamer; pentamer of dimers. Mg(2+) serves as cofactor.

It localises to the cytoplasm. It carries out the reaction 3-methyl-2-oxobutanoate + (6R)-5,10-methylene-5,6,7,8-tetrahydrofolate + H2O = 2-dehydropantoate + (6S)-5,6,7,8-tetrahydrofolate. The protein operates within cofactor biosynthesis; (R)-pantothenate biosynthesis; (R)-pantoate from 3-methyl-2-oxobutanoate: step 1/2. In terms of biological role, catalyzes the reversible reaction in which hydroxymethyl group from 5,10-methylenetetrahydrofolate is transferred onto alpha-ketoisovalerate to form ketopantoate. The polypeptide is 3-methyl-2-oxobutanoate hydroxymethyltransferase (Xylella fastidiosa (strain M12)).